The primary structure comprises 1045 residues: FERM, ARHGEF and pleckstrin domain-containing protein 1 (1045 aa).

Residues 1–37 (MGEIEQRPTPGSRLGAPENSGISTLERGQKPPPTPSG) are disordered. Ser-20 and Ser-23 each carry phosphoserine. At Thr-24 the chain carries Phosphothreonine. The FERM domain maps to 40–320 (VSIKIQMLDD…EHHAFFRLFE (281 aa)). Phosphoserine is present on residues Ser-340, Ser-373, Ser-389, Ser-403, Ser-418, Ser-427, and Ser-433. A disordered region spans residues 392-534 (SASLTFGEGA…TDDEDEGRRK (143 aa)). 2 stretches are compositionally biased toward polar residues: residues 471–489 (TGSLTGSPHLSELSVNSQG) and 496–511 (VTLSPNLSPDTKQASP). Residues Ser-510 and Ser-514 each carry the phosphoserine modification. One can recognise a DH domain in the interval 540 to 730 (KAYFIAKEVS…TEMVAQLHGT (191 aa)). The PH 1 domain occupies 759 to 856 (EFIRLGSLSK…WVEDIQMAID (98 aa)). Phosphoserine is present on residues Ser-833, Ser-872, and Ser-878. The segment at 866-902 (PEFLASSPPDNKSPDEATAADQESEDDLSASRTSLER) is disordered. Thr-883 carries the phosphothreonine modification. Residues Ser-889, Ser-896, and Ser-899 each carry the phosphoserine modification. The 98-residue stretch at 932–1029 (ENQLSGNLLR…WMEVIRSATS (98 aa)) folds into the PH 2 domain.

In terms of assembly, interacts with CADM1. Interacts with RAC1.

It is found in the cell membrane. The protein resides in the synapse. It localises to the synaptosome. Its subcellular location is the cytoplasm. The protein localises to the cytosol. It is found in the cell projection. The protein resides in the filopodium. It localises to the dendrite. Its subcellular location is the dendritic spine. In terms of biological role, functions as a guanine nucleotide exchange factor for RAC1. May play a role in semaphorin signaling. Plays a role in the assembly and disassembly of dendritic filopodia, the formation of dendritic spines, regulation of dendrite length and ultimately the formation of synapses. The protein is FERM, ARHGEF and pleckstrin domain-containing protein 1 (FARP1) of Pongo abelii (Sumatran orangutan).